Reading from the N-terminus, the 150-residue chain is MPIVDSGSVSPLSDAEKNKIRAAWDLVYKDYEKTGVDILVKFFTGTPAAQAFFPKFKGLTTADDLKQSSDVRWHAERIINAVNDAVKSMDDTEKMSMKLKELSIKHAQSFYVDRQYFKVLAGIIADTTAPGDAGFEKLMSMICILLSSAY.

In terms of domain architecture, Globin spans 11 to 150 (PLSDAEKNKI…MICILLSSAY (140 aa)). 2 residues coordinate heme b: His74 and His106.

Belongs to the globin family. As to quaternary structure, monomer.

In Mordacia mordax (Southern hemisphere lamprey), this protein is Globin-1.